We begin with the raw amino-acid sequence, 113 residues long: Large ribosomal subunit protein eL33 (113 aa).

This sequence belongs to the eukaryotic ribosomal protein eL33 family.

This is Large ribosomal subunit protein eL33 (RPL35A) from Tetrahymena thermophila (strain SB210).